The chain runs to 396 residues: Elongation factor Tu (396 aa).

The region spanning 11 to 205 (KPHVNIGTIG…VIDDYIPTPK (195 aa)) is the tr-type G domain. The G1 stretch occupies residues 20-27 (GHVDHGKT). 20-27 (GHVDHGKT) is a GTP binding site. Residue T27 participates in Mg(2+) binding. A G2 region spans residues 61 to 65 (GITIN). Positions 82-85 (DAPG) are G3. Residues 82–86 (DAPGH) and 137–140 (NKTD) each bind GTP. The segment at 137–140 (NKTD) is G4. Residues 175 to 177 (SAL) form a G5 region.

It belongs to the TRAFAC class translation factor GTPase superfamily. Classic translation factor GTPase family. EF-Tu/EF-1A subfamily. In terms of assembly, monomer.

The protein resides in the cytoplasm. The catalysed reaction is GTP + H2O = GDP + phosphate + H(+). Functionally, GTP hydrolase that promotes the GTP-dependent binding of aminoacyl-tRNA to the A-site of ribosomes during protein biosynthesis. The chain is Elongation factor Tu from Limosilactobacillus reuteri (strain DSM 20016) (Lactobacillus reuteri).